The following is a 428-amino-acid chain: C4-dicarboxylate transport protein (428 aa).

8 consecutive transmembrane segments (helical) span residues Val8–Pro28, Leu44–Met64, Leu78–Ile98, Gly148–Gly168, Val184–Met204, Leu222–Ala242, Ile307–Met327, and Ala355–Ile375.

Belongs to the dicarboxylate/amino acid:cation symporter (DAACS) (TC 2.A.23) family.

It is found in the cell inner membrane. Its function is as follows. Responsible for the transport of dicarboxylates such as succinate, fumarate, and malate from the periplasm across the membrane. In Burkholderia mallei (strain ATCC 23344), this protein is C4-dicarboxylate transport protein.